A 325-amino-acid polypeptide reads, in one-letter code: ATP synthase gamma chain (325 aa).

Belongs to the ATPase gamma chain family. F-type ATPases have 2 components, CF(1) - the catalytic core - and CF(0) - the membrane proton channel. CF(1) has five subunits: alpha(3), beta(3), gamma(1), delta(1), epsilon(1). CF(0) has three main subunits: a, b and c.

The protein localises to the cell membrane. In terms of biological role, produces ATP from ADP in the presence of a proton gradient across the membrane. The gamma chain is believed to be important in regulating ATPase activity and the flow of protons through the CF(0) complex. This Corynebacterium glutamicum (strain ATCC 13032 / DSM 20300 / JCM 1318 / BCRC 11384 / CCUG 27702 / LMG 3730 / NBRC 12168 / NCIMB 10025 / NRRL B-2784 / 534) protein is ATP synthase gamma chain.